A 473-amino-acid polypeptide reads, in one-letter code: JmjC domain-containing protein 4 (473 aa).

Residues 140–433 (PTDGLLTDFS…DFDHPYLDRN (294 aa)) form the JmjC domain. Residues 452–473 (TNKKNEKRPAEDDSPSQKKTCQ) form a disordered region.

It localises to the nucleus. Its function is as follows. Has a role in meiosis. The polypeptide is JmjC domain-containing protein 4 (jmj4) (Schizosaccharomyces pombe (strain 972 / ATCC 24843) (Fission yeast)).